Here is an 84-residue protein sequence, read N- to C-terminus: UPF0473 protein CLD_2004 (84 aa).

This sequence belongs to the UPF0473 family.

The protein is UPF0473 protein CLD_2004 of Clostridium botulinum (strain Okra / Type B1).